Here is a 556-residue protein sequence, read N- to C-terminus: Guard cell S-type anion channel SLAC1 (556 aa).

The tract at residues 1 to 103 (MERKQSNAHS…GIINGGDGRK (103 aa)) is disordered. Residues 1–189 (MERKQSNAHS…EQWPFLLRFP (189 aa)) lie on the Cytoplasmic side of the membrane. Positions 10–36 (STFADINEVEDEAEQELQQQENNNNKR) form a coiled coil. The segment covering 25-34 (ELQQQENNNN) has biased composition (low complexity). Serine 59 bears the Phosphoserine; by SRK2E mark. Over residues 69 to 79 (RESRERDDKKS) the composition is skewed to basic and acidic residues. 3 positions are modified to phosphoserine; by SRK2E: serine 86, serine 113, and serine 120. Over residues 86-99 (SFGGFESGGIINGG) the composition is skewed to gly residues. Phosphoserine is present on serine 146. Residues 190 to 210 (IGCFGICLGLSSQAVLWLALA) form a helical membrane-spanning segment. Residues 211-216 (KSPATN) lie on the Extracellular side of the membrane. A helical transmembrane segment spans residues 217–237 (FLHITPLINLVVWLFSLVVLV). Residues 238–265 (SVSFTYILKCIFYFEAVKREYFHPVRVN) are Cytoplasmic-facing. A helical transmembrane segment spans residues 266 to 286 (FFFAPWVVCMFLAISVPPMFS). At 287 to 295 (PNRKYLHPA) the chain is on the extracellular side. The chain crosses the membrane as a helical span at residues 296–316 (IWCVFMGPYFFLELKIYGQWL). Over 317-325 (SGGKRRLCK) the chain is Cytoplasmic. A helical transmembrane segment spans residues 326 to 346 (VANPSSHLSVVGNFVGAILAS). At 347–352 (KVGWDE) the chain is on the extracellular side. A helical membrane pass occupies residues 353 to 373 (VAKFLWAVGFAHYLVVFVTLY). At 374–388 (QRLPTSEALPKELHP) the chain is on the cytoplasmic side. A helical transmembrane segment spans residues 389 to 409 (VYSMFIAAPSAASIAWNTIYG). The Extracellular portion of the chain corresponds to 410–418 (QFDGCSRTC). A helical transmembrane segment spans residues 419-439 (FFIALFLYISLVARINFFTGF). Residue lysine 440 is a topological domain, cytoplasmic. Residues 441–463 (FSVAWWSYTFPMTTASVATIKYA) form a helical membrane-spanning segment. Topologically, residues 464–479 (EAVPGYPSRALALTLS) are extracellular. A helical membrane pass occupies residues 480-500 (FISTAMVCVLFVSTLLHAFVW). The Cytoplasmic portion of the chain corresponds to 501-556 (QTLFPNDLAIAITKRKLTREKKPFKRAYDLKRWTKQALAKKISAEKDFEAEEESHH).

Belongs to the SLAC1 S-type anion channel family. In terms of assembly, homotrimer. Interacts with SRK2E, CPK6, CPK21, CPK23 and PP2CA. The channel is inactivated upon PP2CA and ABI1 binding. Interacts with KAT1, KAT2, KAT3/KC1 and AKT2. Interacts with GHR1. Post-translationally, phosphorylation by SRK2E, especially on Ser-120, activates the channel. Also phosphorylated and activated by CPK21 and CPK23. Abscisic acid (ABA) promotes phosphorylation. This phosphorylation is inhibited by ABI1. Phosphorylated and activated by GHR1; this phosphorylation is repressed by ABI2 but not ABI1. Phosphorylated by HT1 on N-terminus but not C-terminus. In terms of tissue distribution, preferentially expressed in guard cells. Also detected in the vascular strands close to the leaf margins.

It is found in the cell membrane. Its activity is regulated as follows. Activated by GHR1-mediated phosphorylation which is negatively regulated by ABI2 but not ABI1. Activation by SRK2E/OST1 and GHR1 is repressed by HT1. Functionally, slow, weak voltage-dependent S-type anion efflux channel involved in maintenance of anion homeostasis. Cl(-) efflux through SLAC1 causes membrane depolarization, which activates outward-rectifying K1 channels, leading to KCl and water efflux to reduce turgor further and cause stomatal closure, that reduces water loss and promotes leaf turgor. Essential for stomatal closure in response to CO(2), abscisic acid (ABA), ozone O(3), light/dark transitions, humidity change, calcium ions, hydrogen peroxide H(2)O(2), reactive oxygen species (ROS), and nitric oxide. Binds to the highly selective inward-rectifying potassium channels KAT1 and AKT2, and inhibits their activities. Functions as an essential negative regulator of inward potassium channels in guard cells. Essential for the efficient stomatal closure and opening in guard cells. Involved in the local and/or systemic stomatal responses (e.g. stomatal closure) to light stress. This chain is Guard cell S-type anion channel SLAC1, found in Arabidopsis thaliana (Mouse-ear cress).